Here is a 104-residue protein sequence, read N- to C-terminus: Iron-sulfur cluster assembly protein CyaY (104 aa).

It belongs to the frataxin family.

Its function is as follows. Involved in iron-sulfur (Fe-S) cluster assembly. May act as a regulator of Fe-S biogenesis. The polypeptide is Iron-sulfur cluster assembly protein CyaY (Vibrio vulnificus (strain CMCP6)).